The chain runs to 190 residues: Crossover junction endodeoxyribonuclease RuvC (190 aa).

Catalysis depends on residues Asp8, Glu67, and Asp139. Mg(2+)-binding residues include Asp8, Glu67, and Asp139.

Belongs to the RuvC family. As to quaternary structure, homodimer which binds Holliday junction (HJ) DNA. The HJ becomes 2-fold symmetrical on binding to RuvC with unstacked arms; it has a different conformation from HJ DNA in complex with RuvA. In the full resolvosome a probable DNA-RuvA(4)-RuvB(12)-RuvC(2) complex forms which resolves the HJ. It depends on Mg(2+) as a cofactor.

It is found in the cytoplasm. It carries out the reaction Endonucleolytic cleavage at a junction such as a reciprocal single-stranded crossover between two homologous DNA duplexes (Holliday junction).. The RuvA-RuvB-RuvC complex processes Holliday junction (HJ) DNA during genetic recombination and DNA repair. Endonuclease that resolves HJ intermediates. Cleaves cruciform DNA by making single-stranded nicks across the HJ at symmetrical positions within the homologous arms, yielding a 5'-phosphate and a 3'-hydroxyl group; requires a central core of homology in the junction. The consensus cleavage sequence is 5'-(A/T)TT(C/G)-3'. Cleavage occurs on the 3'-side of the TT dinucleotide at the point of strand exchange. HJ branch migration catalyzed by RuvA-RuvB allows RuvC to scan DNA until it finds its consensus sequence, where it cleaves and resolves the cruciform DNA. This is Crossover junction endodeoxyribonuclease RuvC from Haemophilus influenzae (strain 86-028NP).